A 279-amino-acid polypeptide reads, in one-letter code: Orotidine 5'-phosphate decarboxylase (279 aa).

Substrate-binding positions include aspartate 8, lysine 30, 58-67 (DLKFHDIPNT), threonine 117, arginine 177, glutamine 186, glycine 206, and arginine 207. Lysine 60 functions as the Proton donor in the catalytic mechanism.

The protein belongs to the OMP decarboxylase family. Type 1 subfamily. Homodimer.

The enzyme catalyses orotidine 5'-phosphate + H(+) = UMP + CO2. Its pathway is pyrimidine metabolism; UMP biosynthesis via de novo pathway; UMP from orotate: step 2/2. Functionally, catalyzes the decarboxylation of orotidine 5'-monophosphate (OMP) to uridine 5'-monophosphate (UMP). In Campylobacter jejuni subsp. jejuni serotype O:2 (strain ATCC 700819 / NCTC 11168), this protein is Orotidine 5'-phosphate decarboxylase.